We begin with the raw amino-acid sequence, 100 residues long: Large ribosomal subunit protein bL21 (100 aa).

This sequence belongs to the bacterial ribosomal protein bL21 family. Part of the 50S ribosomal subunit. Contacts proteins L15 and L20.

Binds directly to 23S rRNA, probably serving to organize its structure. The chain is Large ribosomal subunit protein bL21 from Deinococcus radiodurans (strain ATCC 13939 / DSM 20539 / JCM 16871 / CCUG 27074 / LMG 4051 / NBRC 15346 / NCIMB 9279 / VKM B-1422 / R1).